Reading from the N-terminus, the 128-residue chain is uncharacterized protein (128 aa).

This is an uncharacterized protein from Frog virus 3 (isolate Goorha) (FV-3).